A 235-amino-acid chain; its full sequence is Chromosome partition protein MukE (235 aa).

A disordered region spans residues 204-235 (QQEPSQSSLLDGFDADDTGHHDSELTMQEGEV).

This sequence belongs to the MukE family. Interacts, and probably forms a ternary complex, with MukF and MukB. The complex formation is stimulated by calcium or magnesium.

Its subcellular location is the cytoplasm. The protein localises to the nucleoid. Its function is as follows. Involved in chromosome condensation, segregation and cell cycle progression. May participate in facilitating chromosome segregation by condensation DNA from both sides of a centrally located replisome during cell division. Probably acts via its interaction with MukB and MukF. This Photobacterium profundum (strain SS9) protein is Chromosome partition protein MukE.